We begin with the raw amino-acid sequence, 246 residues long: Heavy metal-associated isoprenylated plant protein 8 (246 aa).

The segment at 1-31 (MGKNKQNGESDNKSEKKNQKNGDSSVDKSDK) is disordered. Residues 35-99 (CKEIVLKVYM…RVQKKFSRNA (65 aa)) form the HMA 1 domain. Positions 46 and 49 each coordinate a metal cation. Residues 96-122 (SRNAEMISPKHNPKQDQKEPQQKKESA) are disordered. A compositionally biased stretch (basic and acidic residues) spans 108-122 (PKQDQKEPQQKKESA). In terms of domain architecture, HMA 2 spans 125-189 (IKTAILRMNM…IKKKLGKHAE (65 aa)). A metal cation-binding residues include cysteine 136 and cysteine 139. Positions 191-226 (LSQITEKGKDNNKKNNNKKEESDGNKIFSYPPQYSS) are disordered. A compositionally biased stretch (basic and acidic residues) spans 196-214 (EKGKDNNKKNNNKKEESDG). Residue cysteine 243 is modified to Cysteine methyl ester. Cysteine 243 is lipidated: S-farnesyl cysteine. Residues 244–246 (SIM) constitute a propeptide, removed in mature form.

The protein belongs to the HIPP family.

Heavy-metal-binding protein. This is Heavy metal-associated isoprenylated plant protein 8 from Arabidopsis thaliana (Mouse-ear cress).